A 436-amino-acid chain; its full sequence is Enolase (436 aa).

A (2R)-2-phosphoglycerate-binding site is contributed by Gln167. Glu209 acts as the Proton donor in catalysis. Mg(2+)-binding residues include Asp246, Glu291, and Asp318. (2R)-2-phosphoglycerate contacts are provided by Lys343, Arg372, Ser373, and Lys394. Lys343 serves as the catalytic Proton acceptor.

This sequence belongs to the enolase family. As to quaternary structure, component of the RNA degradosome, a multiprotein complex involved in RNA processing and mRNA degradation. It depends on Mg(2+) as a cofactor.

It is found in the cytoplasm. It localises to the secreted. Its subcellular location is the cell surface. It carries out the reaction (2R)-2-phosphoglycerate = phosphoenolpyruvate + H2O. It functions in the pathway carbohydrate degradation; glycolysis; pyruvate from D-glyceraldehyde 3-phosphate: step 4/5. Functionally, catalyzes the reversible conversion of 2-phosphoglycerate (2-PG) into phosphoenolpyruvate (PEP). It is essential for the degradation of carbohydrates via glycolysis. This is Enolase from Actinobacillus pleuropneumoniae serotype 5b (strain L20).